The following is a 187-amino-acid chain: Probable carboxylesterase Culp7 (187 aa).

Cysteine 15 and cysteine 69 are oxidised to a cystine. Serine 80 acts as the Nucleophile in catalysis. Cysteine 151 and cysteine 158 are joined by a disulfide. Aspartate 155 is a catalytic residue. The Proton donor/acceptor role is filled by histidine 167.

It belongs to the cutinase family.

It localises to the cytoplasm. The protein resides in the cell membrane. Its subcellular location is the secreted. The protein localises to the cell wall. Functionally, may have a role in cell wall processes. Does not exhibit cutinase activity. The polypeptide is Probable carboxylesterase Culp7 (Mycobacterium tuberculosis (strain ATCC 25618 / H37Rv)).